The chain runs to 296 residues: 4-hydroxy-tetrahydrodipicolinate synthase (296 aa).

Residue T49 participates in pyruvate binding. Y137 serves as the catalytic Proton donor/acceptor. K165 serves as the catalytic Schiff-base intermediate with substrate. I207 is a binding site for pyruvate.

Belongs to the DapA family. Homotetramer; dimer of dimers.

Its subcellular location is the cytoplasm. The enzyme catalyses L-aspartate 4-semialdehyde + pyruvate = (2S,4S)-4-hydroxy-2,3,4,5-tetrahydrodipicolinate + H2O + H(+). It participates in amino-acid biosynthesis; L-lysine biosynthesis via DAP pathway; (S)-tetrahydrodipicolinate from L-aspartate: step 3/4. Catalyzes the condensation of (S)-aspartate-beta-semialdehyde [(S)-ASA] and pyruvate to 4-hydroxy-tetrahydrodipicolinate (HTPA). The protein is 4-hydroxy-tetrahydrodipicolinate synthase of Bradyrhizobium diazoefficiens (strain JCM 10833 / BCRC 13528 / IAM 13628 / NBRC 14792 / USDA 110).